The following is a 158-amino-acid chain: NAD(P)H-quinone oxidoreductase subunit J, chloroplastic (158 aa).

It belongs to the complex I 30 kDa subunit family. In terms of assembly, NDH is composed of at least 16 different subunits, 5 of which are encoded in the nucleus.

It localises to the plastid. Its subcellular location is the chloroplast thylakoid membrane. It catalyses the reaction a plastoquinone + NADH + (n+1) H(+)(in) = a plastoquinol + NAD(+) + n H(+)(out). The enzyme catalyses a plastoquinone + NADPH + (n+1) H(+)(in) = a plastoquinol + NADP(+) + n H(+)(out). Functionally, NDH shuttles electrons from NAD(P)H:plastoquinone, via FMN and iron-sulfur (Fe-S) centers, to quinones in the photosynthetic chain and possibly in a chloroplast respiratory chain. The immediate electron acceptor for the enzyme in this species is believed to be plastoquinone. Couples the redox reaction to proton translocation, and thus conserves the redox energy in a proton gradient. The sequence is that of NAD(P)H-quinone oxidoreductase subunit J, chloroplastic from Cryptomeria japonica (Japanese cedar).